A 276-amino-acid chain; its full sequence is Diaminopimelate epimerase (276 aa).

Substrate contacts are provided by Asn13, Gln46, and Asn66. Cys75 acts as the Proton donor in catalysis. Substrate-binding positions include 76–77, Asn159, Asn192, and 210–211; these read GN and ER. Residue Cys219 is the Proton acceptor of the active site. 220-221 lines the substrate pocket; sequence GT.

It belongs to the diaminopimelate epimerase family. Homodimer.

Its subcellular location is the cytoplasm. The enzyme catalyses (2S,6S)-2,6-diaminopimelate = meso-2,6-diaminopimelate. Its pathway is amino-acid biosynthesis; L-lysine biosynthesis via DAP pathway; DL-2,6-diaminopimelate from LL-2,6-diaminopimelate: step 1/1. Catalyzes the stereoinversion of LL-2,6-diaminopimelate (L,L-DAP) to meso-diaminopimelate (meso-DAP), a precursor of L-lysine and an essential component of the bacterial peptidoglycan. The sequence is that of Diaminopimelate epimerase from Chromobacterium violaceum (strain ATCC 12472 / DSM 30191 / JCM 1249 / CCUG 213 / NBRC 12614 / NCIMB 9131 / NCTC 9757 / MK).